The primary structure comprises 88 residues: Large ribosomal subunit protein eL31 (88 aa).

This sequence belongs to the eukaryotic ribosomal protein eL31 family.

This chain is Large ribosomal subunit protein eL31 (rpl31e), found in Sulfurisphaera tokodaii (strain DSM 16993 / JCM 10545 / NBRC 100140 / 7) (Sulfolobus tokodaii).